Consider the following 105-residue polypeptide: Large ribosomal subunit protein bL21 (105 aa).

It belongs to the bacterial ribosomal protein bL21 family. As to quaternary structure, part of the 50S ribosomal subunit. Contacts protein L20.

In terms of biological role, this protein binds to 23S rRNA in the presence of protein L20. This chain is Large ribosomal subunit protein bL21, found in Natranaerobius thermophilus (strain ATCC BAA-1301 / DSM 18059 / JW/NM-WN-LF).